The chain runs to 549 residues: Chaperonin GroEL 1 (549 aa).

ATP contacts are provided by residues 30–33 (TLGP), lysine 51, 87–91 (DGTTT), glycine 415, 479–481 (NAA), and aspartate 495.

This sequence belongs to the chaperonin (HSP60) family. In terms of assembly, forms a cylinder of 14 subunits composed of two heptameric rings stacked back-to-back. Interacts with the co-chaperonin GroES.

Its subcellular location is the cytoplasm. The enzyme catalyses ATP + H2O + a folded polypeptide = ADP + phosphate + an unfolded polypeptide.. Its function is as follows. Together with its co-chaperonin GroES, plays an essential role in assisting protein folding. The GroEL-GroES system forms a nano-cage that allows encapsulation of the non-native substrate proteins and provides a physical environment optimized to promote and accelerate protein folding. The sequence is that of Chaperonin GroEL 1 from Azoarcus sp. (strain BH72).